Here is a 302-residue protein sequence, read N- to C-terminus: Urease accessory protein UreD 2 (302 aa).

This sequence belongs to the UreD family. UreD, UreF and UreG form a complex that acts as a GTP-hydrolysis-dependent molecular chaperone, activating the urease apoprotein by helping to assemble the nickel containing metallocenter of UreC. The UreE protein probably delivers the nickel.

The protein resides in the cytoplasm. In terms of biological role, required for maturation of urease via the functional incorporation of the urease nickel metallocenter. This is Urease accessory protein UreD 2 from Brucella ovis (strain ATCC 25840 / 63/290 / NCTC 10512).